We begin with the raw amino-acid sequence, 261 residues long: Ubiquinone biosynthesis O-methyltransferase (261 aa).

The disordered stretch occupies residues 1 to 22 (MTMQVDPSANSSAASSAAPGTT). Low complexity predominate over residues 8-18 (SANSSAASSAA). Arginine 55, glycine 86, aspartate 107, and methionine 149 together coordinate S-adenosyl-L-methionine.

The protein belongs to the methyltransferase superfamily. UbiG/COQ3 family.

The enzyme catalyses a 3-demethylubiquinol + S-adenosyl-L-methionine = a ubiquinol + S-adenosyl-L-homocysteine + H(+). The catalysed reaction is a 3-(all-trans-polyprenyl)benzene-1,2-diol + S-adenosyl-L-methionine = a 2-methoxy-6-(all-trans-polyprenyl)phenol + S-adenosyl-L-homocysteine + H(+). It participates in cofactor biosynthesis; ubiquinone biosynthesis. In terms of biological role, O-methyltransferase that catalyzes the 2 O-methylation steps in the ubiquinone biosynthetic pathway. The polypeptide is Ubiquinone biosynthesis O-methyltransferase (Nitrobacter winogradskyi (strain ATCC 25391 / DSM 10237 / CIP 104748 / NCIMB 11846 / Nb-255)).